Here is a 207-residue protein sequence, read N- to C-terminus: 8-oxoguanine DNA glycosylase/AP lyase (207 aa).

Active-site residues include Lys-129 and Asp-147.

Belongs to the type-2 OGG1 family.

The enzyme catalyses 2'-deoxyribonucleotide-(2'-deoxyribose 5'-phosphate)-2'-deoxyribonucleotide-DNA = a 3'-end 2'-deoxyribonucleotide-(2,3-dehydro-2,3-deoxyribose 5'-phosphate)-DNA + a 5'-end 5'-phospho-2'-deoxyribonucleoside-DNA + H(+). Catalyzes the excision of an oxidatively damaged form of guanine (7,8-dihydro-8-oxoguanine = 8-oxoG) from DNA. Also cleaves the DNA backbone at apurinic/apyrimidinic sites (AP sites). Has little specificity for the base opposite oxoG. This chain is 8-oxoguanine DNA glycosylase/AP lyase, found in Methanocaldococcus jannaschii (strain ATCC 43067 / DSM 2661 / JAL-1 / JCM 10045 / NBRC 100440) (Methanococcus jannaschii).